Here is a 1039-residue protein sequence, read N- to C-terminus: uncharacterized protein (1039 aa).

Positions Met-1–Ala-28 are cleaved as a signal peptide. A run of 6 helical transmembrane segments spans residues Ile-326–Gly-346, Tyr-354–Thr-374, Met-387–Met-407, Met-491–Val-511, Cys-517–Phe-537, and Met-551–Val-571. The segment at Lys-654 to Ser-680 is disordered. A helical transmembrane segment spans residues Ile-710–Phe-730. Disordered regions lie at residues Leu-799 to Val-875, Ile-917 to Asn-949, and Leu-1004 to Pro-1039. Over residues Gly-802–Gly-811 the composition is skewed to gly residues. The span at Gly-812–Ser-836 shows a compositional bias: low complexity. Positions Gly-843–Asn-861 are enriched in polar residues. Basic and acidic residues-rich tracts occupy residues Ile-917–Glu-939 and Leu-1004–Ser-1033.

The protein belongs to the TrbL/VirB6 family.

Its subcellular location is the cell membrane. This is an uncharacterized protein from Rickettsia bellii (strain RML369-C).